A 200-amino-acid polypeptide reads, in one-letter code: Cuticle protein 21.3 (200 aa).

10 consecutive repeat copies span residues Ala-98–Ala-101, Ala-104–Ala-107, Ala-116–Ala-119, Ala-121–Ala-124, Ala-133–Ala-136, Ala-154–Ala-157, Ala-166–Ala-169, Ala-178–Ala-181, Ala-184–Ala-187, and Ala-196–Ala-199.

Functionally, component of the cuticle of migratory locust which contains more than 100 different structural proteins. This Locusta migratoria (Migratory locust) protein is Cuticle protein 21.3.